Here is a 456-residue protein sequence, read N- to C-terminus: Bifunctional protein GlmU (456 aa).

The pyrophosphorylase stretch occupies residues 1-229 (MSNSAMSVVI…LSEVEGVNNR (229 aa)). Residues 11–14 (LAAG), Lys-25, Gln-76, 81–82 (GT), 103–105 (YGD), Gly-140, Glu-154, Asn-169, and Asn-227 each bind UDP-N-acetyl-alpha-D-glucosamine. Asp-105 contributes to the Mg(2+) binding site. Asn-227 contributes to the Mg(2+) binding site. The linker stretch occupies residues 230-250 (LQLSALERVYQREQADRLLLA). Positions 251–456 (GVMLLDPARF…SGWQRPVKKK (206 aa)) are N-acetyltransferase. Residues Arg-333 and Lys-351 each contribute to the UDP-N-acetyl-alpha-D-glucosamine site. His-363 serves as the catalytic Proton acceptor. UDP-N-acetyl-alpha-D-glucosamine contacts are provided by Tyr-366 and Asn-377. Acetyl-CoA-binding positions include Ala-380, 386–387 (NY), Ser-405, Ala-423, and Arg-440.

In the N-terminal section; belongs to the N-acetylglucosamine-1-phosphate uridyltransferase family. This sequence in the C-terminal section; belongs to the transferase hexapeptide repeat family. As to quaternary structure, homotrimer. The cofactor is Mg(2+).

The protein resides in the cytoplasm. It catalyses the reaction alpha-D-glucosamine 1-phosphate + acetyl-CoA = N-acetyl-alpha-D-glucosamine 1-phosphate + CoA + H(+). The catalysed reaction is N-acetyl-alpha-D-glucosamine 1-phosphate + UTP + H(+) = UDP-N-acetyl-alpha-D-glucosamine + diphosphate. Its pathway is nucleotide-sugar biosynthesis; UDP-N-acetyl-alpha-D-glucosamine biosynthesis; N-acetyl-alpha-D-glucosamine 1-phosphate from alpha-D-glucosamine 6-phosphate (route II): step 2/2. The protein operates within nucleotide-sugar biosynthesis; UDP-N-acetyl-alpha-D-glucosamine biosynthesis; UDP-N-acetyl-alpha-D-glucosamine from N-acetyl-alpha-D-glucosamine 1-phosphate: step 1/1. It participates in bacterial outer membrane biogenesis; LPS lipid A biosynthesis. Functionally, catalyzes the last two sequential reactions in the de novo biosynthetic pathway for UDP-N-acetylglucosamine (UDP-GlcNAc). The C-terminal domain catalyzes the transfer of acetyl group from acetyl coenzyme A to glucosamine-1-phosphate (GlcN-1-P) to produce N-acetylglucosamine-1-phosphate (GlcNAc-1-P), which is converted into UDP-GlcNAc by the transfer of uridine 5-monophosphate (from uridine 5-triphosphate), a reaction catalyzed by the N-terminal domain. The protein is Bifunctional protein GlmU of Pectobacterium carotovorum subsp. carotovorum (strain PC1).